Consider the following 237-residue polypeptide: Sugar fermentation stimulation protein homolog (237 aa).

The protein belongs to the SfsA family.

In Methylobacterium radiotolerans (strain ATCC 27329 / DSM 1819 / JCM 2831 / NBRC 15690 / NCIMB 10815 / 0-1), this protein is Sugar fermentation stimulation protein homolog.